Consider the following 171-residue polypeptide: MAILKWKLSRWHTSDQISTTETADPKTTEATNNESTQGTKRRRLDLPDSRDNTQYSTKYTDCAVDSRPRGGGLHSTTNCTYKGRNVCSSKVSPIVHLKGDPNSLKCLRYRLKPFKDLYCNMSSTWHWTSDDKGDKVGIVTVTYTTETQRQLFLNTVKIPPTVQISTGVMSL.

The tract at residues 15–54 is disordered; sequence DQISTTETADPKTTEATNNESTQGTKRRRLDLPDSRDNTQ. A compositionally biased stretch (polar residues) spans 28–38; sequence TEATNNESTQG.

It belongs to the papillomaviridae E8^E2C protein family.

It localises to the host nucleus. Its function is as follows. Plays a role in limiting the replication of viral DNA in keratinocytes. Recruits the host NCoR/SMRT complex to viral replication foci to mediate repression of both viral replication and transcription. The sequence is that of Protein E8^E2C from Homo sapiens (Human).